Consider the following 380-residue polypeptide: MLVDKLYALSLSHKRLSVDELSEISRNVHKTCYNVQAFVFHTCNRVEVYLYDADAGPAEHIKRSYGPYVEKVAEFRGVEAARHLFRVAAGLESMLIGETDVLGQLEEAYESQVRRGNLRGLLKTVVERAVAVGKRVRTETGISRGPRGLGSLSIVYLSRRLPLREISVCVIGAGAVGRGVVKELIDAGVRRVAVVNRTVEKAADLGVEVRPLTSENVEWCLREFDVVYTAVSSFEPVVVYVPPGSRVKLVVDLGVPRNTAPNLPVEVVTLDHLRELAEEFNRQRAEEVSKAEKIVEEEVARLEEVLRRRWVELEMSALLKKWFAVAEEEGERAGGGPARLAAMSTVKRTLLPLVNYIKEVAVKDLAVAEGLLQVLKSAYA.

Substrate contacts are provided by residues threonine 42–arginine 45, serine 93, glutamate 98–aspartate 100, and glutamine 104. The active-site Nucleophile is the cysteine 43. Glycine 172 to glycine 177 provides a ligand contact to NADP(+).

It belongs to the glutamyl-tRNA reductase family. Homodimer.

The enzyme catalyses (S)-4-amino-5-oxopentanoate + tRNA(Glu) + NADP(+) = L-glutamyl-tRNA(Glu) + NADPH + H(+). It participates in porphyrin-containing compound metabolism; protoporphyrin-IX biosynthesis; 5-aminolevulinate from L-glutamyl-tRNA(Glu): step 1/2. Catalyzes the NADPH-dependent reduction of glutamyl-tRNA(Glu) to glutamate 1-semialdehyde (GSA). The chain is Glutamyl-tRNA reductase 1 from Pyrobaculum calidifontis (strain DSM 21063 / JCM 11548 / VA1).